We begin with the raw amino-acid sequence, 241 residues long: Lysoplasmalogenase TMEM86A (241 aa).

Residues 1–13 lie on the Cytoplasmic side of the membrane; the sequence is MVSPVTVVKSEGP. Residues 14–30 form a helical membrane-spanning segment; it reads KLVPFFKATCVYFVLWL. Residues 31-36 lie on the Extracellular side of the membrane; that stretch reads PSSSPS. Residues 37–59 traverse the membrane as a helical segment; the sequence is WVSALIKCLPIFCLWLFLLAHGV. The Cytoplasmic segment spans residues 60 to 67; it reads RFLLAHPS. Residues 68-87 form a helical membrane-spanning segment; that stretch reads ASLIFVGLVFSAVGDAFLIW. Over 88-96 the chain is Extracellular; that stretch reads QDHGYFEHG. Residues 97–113 traverse the membrane as a helical segment; the sequence is LLMFAVAHILYAAAFGM. The Cytoplasmic segment spans residues 114-119; the sequence is RPLALR. A helical transmembrane segment spans residues 120 to 136; the sequence is TGLVIGVLSGLCYALLY. Over 137–142 the chain is Extracellular; the sequence is PGLSGA. A helical transmembrane segment spans residues 143 to 159; that stretch reads FTYLVGVYVALISFMGW. Topologically, residues 160 to 176 are cytoplasmic; sequence RAMAGLRLVGAAWRWTE. The chain crosses the membrane as a helical span at residues 177–195; that stretch reads LAAGGGALLFILSDLTIAL. Residues 196-206 lie on the Extracellular side of the membrane; sequence NKFCFPVPYSR. A helical membrane pass occupies residues 207 to 225; it reads ALIMSTYYAAQMLIALSAV. The Cytoplasmic portion of the chain corresponds to 226-241; that stretch reads ESREPVGEDYRLSKAD.

It belongs to the TMEM86 family. As to expression, highly expressed in the jejunum, white adipose tissue, kidney and macrophages.

It is found in the endoplasmic reticulum membrane. The catalysed reaction is a 1-O-(1Z-alkenyl)-sn-glycero-3-phosphocholine + H2O = a 2,3-saturated aldehyde + sn-glycerol 3-phosphocholine. It carries out the reaction a 1-O-(1Z-alkenyl)-sn-glycero-3-phosphoethanolamine + H2O = a 2,3-saturated aldehyde + sn-glycero-3-phosphoethanolamine. Functionally, catalyzes the hydrolysis of the vinyl ether bond of choline or ethanolamine lysoplasmalogens, forming fatty aldehyde and glycerophosphocholine or glycerophosphoethanolamine, respectively and is specific for the sn-2-deacylated (lyso) form of plasmalogen. Plays an important role in lysoplasmalogen metabolism in the adipocyte tissue and macrophages. This is Lysoplasmalogenase TMEM86A (Tmem86a) from Mus musculus (Mouse).